The chain runs to 170 residues: F107 fimbrial protein (170 aa).

The N-terminal stretch at 1–21 (MKRLVFISFVALSMTAGSAMA) is a signal peptide. Cys-37 and Cys-78 are joined by a disulfide.

Belongs to the fimbrial protein family.

Its subcellular location is the fimbrium. Fimbriae (also called pili), polar filaments radiating from the surface of the bacterium to a length of 0.5-1.5 micrometers and numbering 100-300 per cell, enable bacteria to colonize the epithelium of specific host organs. In Escherichia coli, this protein is F107 fimbrial protein (fedA).